The chain runs to 242 residues: 1-(5-phosphoribosyl)-5-[(5-phosphoribosylamino)methylideneamino] imidazole-4-carboxamide isomerase (242 aa).

D10 serves as the catalytic Proton acceptor. Residue D131 is the Proton donor of the active site.

This sequence belongs to the HisA/HisF family.

It localises to the cytoplasm. It carries out the reaction 1-(5-phospho-beta-D-ribosyl)-5-[(5-phospho-beta-D-ribosylamino)methylideneamino]imidazole-4-carboxamide = 5-[(5-phospho-1-deoxy-D-ribulos-1-ylimino)methylamino]-1-(5-phospho-beta-D-ribosyl)imidazole-4-carboxamide. The protein operates within amino-acid biosynthesis; L-histidine biosynthesis; L-histidine from 5-phospho-alpha-D-ribose 1-diphosphate: step 4/9. The sequence is that of 1-(5-phosphoribosyl)-5-[(5-phosphoribosylamino)methylideneamino] imidazole-4-carboxamide isomerase from Bifidobacterium animalis subsp. lactis (strain AD011).